A 146-amino-acid polypeptide reads, in one-letter code: MGRFIFVSFGLLVVFLSLSGTGADCPSDWSSYEGHCYRVFQQQMNWADAEKFCTQQRKESHLVSFESSEEVDFVVSKTFPILKENFVWIGLSNVWNGCRLQWSDGTELKYNAWSAESECIASKTTDNQWWSMDCSKTYPFVCKLIV.

The N-terminal stretch at 1–23 (MGRFIFVSFGLLVVFLSLSGTGA) is a signal peptide. Cystine bridges form between C25/C36, C53/C142, and C119/C134. The region spanning 32 to 143 (YEGHCYRVFQ…CSKTYPFVCK (112 aa)) is the C-type lectin domain.

The protein belongs to the snaclec family. As to quaternary structure, heterodimer of subunits alpha and beta; disulfide-linked. As to expression, expressed by the venom gland.

Its subcellular location is the secreted. Snaclec that dose-dependently inhibits platelet aggregation induced by ristocetin or low-dose thrombin, but not by high-dose thrombin. Binds to GPIbalpha (GP1BA). In vivo, also dose-dependently induces thrombocytopenia of mice and platelet counts remains at very low level even after 18 hours intravenous injection. This chain is Snaclec jerdonibitin subunit beta, found in Protobothrops jerdonii (Jerdon's pitviper).